We begin with the raw amino-acid sequence, 1040 residues long: MSNDREVPTLSQLNTTVSRDKDVSDTLSPDFDSKGSATGRDGGNFPMYIAINEYFKRMEDELDMKPGDKIKVITDDEEYKDGWYFGRNLRTNEEGLYPVVFTQKITVEKAPTLMRAKSTKRIYSPLTNEDPLLSSTFISENDSNSELPTPQPIETAASISRTANGKIERNLSLKNTMSDIDNALLEFKDDSIGPPDRFINSGRDEEHSITHETILSATDGLDVVESNSKPTTSSSTGFLNGDLENQATLINGIDTTKLNPVEAEFWSPEEITAYFIMEGYDVQSASRFQKHKISGKILLELELVHLKELDINSFGTRFEIFKEIEKIKEAIRTNGRSLNRASKTNNANIYNQLMPPANVDQRASYRGHVRKTSQSLEDLPSQQNFIPTPRNTRNSSASKHRPKSLVFDSQEANANIAPDVQIPQVVEEMAGNENLFVSPRRAPKPPSYPSPAQPPKSPLLNNTRTSPSPAQLYSWQSPTLSFSGPKRTSYIDQYSSSDSNFNSRSALPKNNQGGGKALSPIPSPTRNSVRNEDSEGKLTSSSKRNSVPYYGYAPESSSDRKSSCSSHEEEQFQETMNTFERPTSSIYADGSTIASISNDKLAHEKEGKKKPTRHSSSLSSKSKSDSRRNSSLKRSSSASRTSSFKKSSFMLSPFRQQFTDNAARSSSPEENPITSMPSEKNSSPIVDKKSSKKSRSKRRSVSAKEAEIFTETVKDDKNKRSASEAIKGETLKGKSLRQMTARPVAKKKQTSAFIEGLRSISVKEAMKDADFSGWMSKKGSGAMSTWKTRFFTLHGTRLSYFSSTTDTRERGLIDITAHRVVPAKEDDKLVSLYAASTGKGRYCFKLLPPQPGSKKGLTFTQPRTHYFAVDNKEEMRGWMAALIKTTIDIDTSVPIISSYTTPTVSLSKAQEMLAEAREETKLREQQMLENEEDEDQFLWDQQQLQQQQHDNNQGQADRTISASTQRTSDEDNTISTPNLSSANNTTIGSNGFSSPFLLASGLLSPGVARNSSMRGTEKKGKFSTEEDYFGDNSKHKTDKI.

The segment at 1–39 is disordered; it reads MSNDREVPTLSQLNTTVSRDKDVSDTLSPDFDSKGSATG. The segment covering 8 to 17 has biased composition (polar residues); that stretch reads PTLSQLNTTV. A phosphoserine mark is found at S18, S24, and S28. The region spanning 43–107 is the SH3 domain; sequence GNFPMYIAIN…PVVFTQKITV (65 aa). In terms of domain architecture, SAM spans 266–330; that stretch reads WSPEEITAYF…FKEIEKIKEA (65 aa). 3 disordered regions span residues 365–412, 437–478, and 491–744; these read YRGH…SQEA, VSPR…WQSP, and IDQY…ARPV. Polar residues predominate over residues 372 to 397; it reads TSQSLEDLPSQQNFIPTPRNTRNSSA. Positions 444–457 are enriched in pro residues; that stretch reads KPPSYPSPAQPPKS. Phosphoserine is present on S450. The segment covering 459 to 478 has biased composition (polar residues); sequence LLNNTRTSPSPAQLYSWQSP. Residues 495-505 are compositionally biased toward low complexity; the sequence is SSSDSNFNSRS. Phosphoserine is present on residues S519, S523, and S546. Residues 557–570 show a composition bias toward basic and acidic residues; the sequence is SSDRKSSCSSHEEE. The segment covering 573–598 has biased composition (polar residues); that stretch reads QETMNTFERPTSSIYADGSTIASISN. Over residues 600–609 the composition is skewed to basic and acidic residues; sequence KLAHEKEGKK. A compositionally biased stretch (low complexity) spans 632-648; sequence LKRSSSASRTSSFKKSS. Position 652 is a phosphoserine (S652). A compositionally biased stretch (polar residues) spans 654–684; it reads FRQQFTDNAARSSSPEENPITSMPSEKNSSP. Over residues 690 to 701 the composition is skewed to basic residues; that stretch reads SSKKSRSKRRSV. Residues 702–732 are compositionally biased toward basic and acidic residues; it reads SAKEAEIFTETVKDDKNKRSASEAIKGETLK. The 120-residue stretch at 768-887 folds into the PH domain; sequence DADFSGWMSK…WMAALIKTTI (120 aa). A compositionally biased stretch (low complexity) spans 943–957; it reads QLQQQQHDNNQGQAD. Disordered stretches follow at residues 943 to 986 and 1007 to 1040; these read QLQQ…NNTT and VARN…TDKI. The span at 973–986 shows a compositional bias: polar residues; it reads TISTPNLSSANNTT. Residues 1015–1024 show a composition bias toward basic and acidic residues; the sequence is GTEKKGKFST.

In terms of assembly, interacts with BEM1. Interacts with TOS7.

It is found in the bud. The protein resides in the bud neck. Its function is as follows. Protein involved in bud formation. Functions redundantly with BOI1 to promote the fusion of secretory vesicles with the plasma membrane at sites of polarized growth. Acts as an abscission inhibitor during cytokinesis in response to chromatin bridges. The sequence is that of BEM1-interacting protein 2 from Saccharomyces cerevisiae (strain ATCC 204508 / S288c) (Baker's yeast).